The primary structure comprises 476 residues: ATP synthase subunit beta (476 aa).

ATP is bound at residue 154–161 (GGAGVGKT).

This sequence belongs to the ATPase alpha/beta chains family. As to quaternary structure, F-type ATPases have 2 components, CF(1) - the catalytic core - and CF(0) - the membrane proton channel. CF(1) has five subunits: alpha(3), beta(3), gamma(1), delta(1), epsilon(1). CF(0) has four main subunits: a(1), b(1), b'(1) and c(9-12).

It localises to the cell inner membrane. It carries out the reaction ATP + H2O + 4 H(+)(in) = ADP + phosphate + 5 H(+)(out). Functionally, produces ATP from ADP in the presence of a proton gradient across the membrane. The catalytic sites are hosted primarily by the beta subunits. This chain is ATP synthase subunit beta, found in Rhodopseudomonas palustris (strain HaA2).